Reading from the N-terminus, the 441-residue chain is Sec-independent protein translocase protein TatCo (441 aa).

The segment at 1–185 (MADEERDAGL…LVGEAPESDQ (185 aa)) is disordered. A compositionally biased stretch (acidic residues) spans 13–22 (ADDETDASDD). Over residues 51–62 (TPRDETVTHGSD) the composition is skewed to basic and acidic residues. The segment covering 75-104 (DNGDDSDSDTDAAPDDADDSATDSDADSDD) has biased composition (acidic residues). Basic and acidic residues predominate over residues 105–117 (EPRLLADDEHTSH). 2 stretches are compositionally biased toward acidic residues: residues 122–138 (TYDD…DPDA) and 164–173 (EDADFDDEDV). The next 6 helical transmembrane spans lie at 200-220 (LAVV…GADI), 276-296 (VAGL…TYLF), 317-337 (LVLA…AIFA), 357-377 (FNLI…PLFV), 395-415 (RLLF…DPTG), and 416-436 (MAPI…LAAL).

This sequence belongs to the TatC family. Forms a complex with TatA.

Its subcellular location is the cell membrane. Part of the twin-arginine translocation (Tat) system that transports large folded proteins containing a characteristic twin-arginine motif in their signal peptide across membranes. This is Sec-independent protein translocase protein TatCo from Haloferax volcanii (strain ATCC 29605 / DSM 3757 / JCM 8879 / NBRC 14742 / NCIMB 2012 / VKM B-1768 / DS2) (Halobacterium volcanii).